Consider the following 354-residue polypeptide: Phenylalanine--tRNA ligase alpha subunit (354 aa).

Glu279 is a binding site for Mg(2+).

The protein belongs to the class-II aminoacyl-tRNA synthetase family. Phe-tRNA synthetase alpha subunit type 1 subfamily. As to quaternary structure, tetramer of two alpha and two beta subunits. Mg(2+) serves as cofactor.

Its subcellular location is the cytoplasm. The enzyme catalyses tRNA(Phe) + L-phenylalanine + ATP = L-phenylalanyl-tRNA(Phe) + AMP + diphosphate + H(+). The sequence is that of Phenylalanine--tRNA ligase alpha subunit from Cupriavidus pinatubonensis (strain JMP 134 / LMG 1197) (Cupriavidus necator (strain JMP 134)).